Here is a 400-residue protein sequence, read N- to C-terminus: Nicotinate phosphoribosyltransferase (400 aa).

Phosphohistidine; by autocatalysis is present on histidine 220.

The protein belongs to the NAPRTase family. In terms of processing, transiently phosphorylated on a His residue during the reaction cycle. Phosphorylation strongly increases the affinity for substrates and increases the rate of nicotinate D-ribonucleotide production. Dephosphorylation regenerates the low-affinity form of the enzyme, leading to product release.

It carries out the reaction nicotinate + 5-phospho-alpha-D-ribose 1-diphosphate + ATP + H2O = nicotinate beta-D-ribonucleotide + ADP + phosphate + diphosphate. Its pathway is cofactor biosynthesis; NAD(+) biosynthesis; nicotinate D-ribonucleotide from nicotinate: step 1/1. Functionally, catalyzes the synthesis of beta-nicotinate D-ribonucleotide from nicotinate and 5-phospho-D-ribose 1-phosphate at the expense of ATP. This is Nicotinate phosphoribosyltransferase from Escherichia coli O127:H6 (strain E2348/69 / EPEC).